A 525-amino-acid polypeptide reads, in one-letter code: Glucans biosynthesis protein G (525 aa).

The N-terminal stretch at 1–35 (MIFRSVSNTDFRARVRTLLLAGSTALAFVAAPVWA) is a signal peptide.

This sequence belongs to the OpgD/OpgG family.

The protein resides in the periplasm. The protein operates within glycan metabolism; osmoregulated periplasmic glucan (OPG) biosynthesis. Involved in the biosynthesis of osmoregulated periplasmic glucans (OPGs). The chain is Glucans biosynthesis protein G from Pseudomonas paraeruginosa (strain DSM 24068 / PA7) (Pseudomonas aeruginosa (strain PA7)).